The primary structure comprises 432 residues: Short/branched chain specific acyl-CoA dehydrogenase, mitochondrial (432 aa).

The N-terminal 33 residues, 1–33 (MERATVRLLRGGALLRRNFPSCLSSWKTPPHAL), are a transit peptide targeting the mitochondrion. Lys-70 is modified (N6-acetyllysine; alternate). Lys-70 carries the post-translational modification N6-succinyllysine; alternate. FAD contacts are provided by residues 174–183 (ICISETGAGS) and 207–209 (WIS). Ser-183 is a binding site for substrate. Phosphoserine is present on Ser-183. Substrate contacts are provided by Tyr-229 and Tyr-283. At Lys-284 the chain carries N6-acetyllysine; alternate. The residue at position 284 (Lys-284) is an N6-succinyllysine; alternate. A substrate-binding site is contributed by 291 to 294 (NEGR). FAD is bound by residues Arg-319, Gln-330, and 387–391 (EWMGG). Glu-414 (proton acceptor) is an active-site residue. 416–418 (TSN) contacts FAD. At Lys-426 the chain carries N6-acetyllysine.

The protein belongs to the acyl-CoA dehydrogenase family. As to quaternary structure, homotetramer. Requires FAD as cofactor.

The protein resides in the mitochondrion matrix. The catalysed reaction is 2-methylbutanoyl-CoA + oxidized [electron-transfer flavoprotein] + H(+) = (2E)-2-methylbut-2-enoyl-CoA + reduced [electron-transfer flavoprotein]. It carries out the reaction (2S)-2-methylbutanoyl-CoA + oxidized [electron-transfer flavoprotein] + H(+) = (2E)-2-methylbut-2-enoyl-CoA + reduced [electron-transfer flavoprotein]. The enzyme catalyses (2R)-2-methylbutanoyl-CoA + oxidized [electron-transfer flavoprotein] + H(+) = ethylacryloyl-CoA + reduced [electron-transfer flavoprotein]. It catalyses the reaction butanoyl-CoA + oxidized [electron-transfer flavoprotein] + H(+) = (2E)-butenoyl-CoA + reduced [electron-transfer flavoprotein]. The catalysed reaction is 2-methylpropanoyl-CoA + oxidized [electron-transfer flavoprotein] + H(+) = 2-methylpropenoyl-CoA + reduced [electron-transfer flavoprotein]. It carries out the reaction hexanoyl-CoA + oxidized [electron-transfer flavoprotein] + H(+) = (2E)-hexenoyl-CoA + reduced [electron-transfer flavoprotein]. The enzyme catalyses valproyl-CoA + oxidized [electron-transfer flavoprotein] + H(+) = (2E)-2-propylpent-2-enoyl-CoA + reduced [electron-transfer flavoprotein]. It functions in the pathway lipid metabolism; mitochondrial fatty acid beta-oxidation. Its pathway is amino-acid degradation; L-isoleucine degradation. Short and branched chain specific acyl-CoA dehydrogenase that catalyzes the removal of one hydrogen from C-2 and C-3 of the fatty acyl-CoA thioester, resulting in the formation of trans-2-enoyl-CoA. Among the different mitochondrial acyl-CoA dehydrogenases, acts specifically on short and branched chain acyl-CoA derivatives such as (S)-2-methylbutyryl-CoA as well as short straight chain acyl-CoAs such as butyryl-CoA. Plays an important role in the metabolism of L-isoleucine by catalyzing the dehydrogenation of 2-methylbutyryl-CoA, one of the steps of the L-isoleucine catabolic pathway. Can also act on valproyl-CoA, a metabolite of the valproic acid drug. The polypeptide is Short/branched chain specific acyl-CoA dehydrogenase, mitochondrial (ACADSB) (Bos taurus (Bovine)).